The primary structure comprises 744 residues: Catalase A (744 aa).

Catalysis depends on residues His-93 and Asn-166. Tyr-380 lines the heme pocket.

This sequence belongs to the catalase family. Heme is required as a cofactor.

It localises to the peroxisome matrix. It catalyses the reaction 2 H2O2 = O2 + 2 H2O. Catalyzes the degradation of hydrogen peroxide (H(2)O(2)) generated by peroxisomal oxidases to water and oxygen, thereby protecting cells from the toxic effects of hydrogen peroxide. This Emericella nidulans (strain FGSC A4 / ATCC 38163 / CBS 112.46 / NRRL 194 / M139) (Aspergillus nidulans) protein is Catalase A (catA).